A 334-amino-acid chain; its full sequence is Hematopoietic SH2 domain-containing protein (334 aa).

In terms of domain architecture, SH2 spans 34–125 (WFHGTISREA…PFGELLTQAC (92 aa)). 2 disordered regions span residues 157–181 (EVQRSSCPPEEASERKPSTTTKGEF) and 254–280 (EDSCAATTSLQNPAEPQALRGREATFR). Over residues 258-267 (AATTSLQNPA) the composition is skewed to polar residues.

Interacts with FES and TNK2. Post-translationally, may be phosphorylated by FES and ACK1. As to expression, predominantly expressed in spleen and thymus. Appears not to be expressed in heart, brain, liver, kidney, embryo, lung and ovary.

The protein resides in the cytoplasm. It localises to the mitochondrion. In terms of biological role, adapter protein involved in tyrosine kinase and CD28 signaling. May be a modulator of the apoptotic response through its ability to affect mitochondrial stability. The protein is Hematopoietic SH2 domain-containing protein (Hsh2d) of Mus musculus (Mouse).